The sequence spans 296 residues: Putative peptide transport system permease protein BruAb2_1032 (296 aa).

6 consecutive transmembrane segments (helical) span residues 35-55, 97-117, 131-151, 205-225, 229-249, and 260-280; these read IGLV…WITN, LWIG…IGIA, VMDA…SAAL, ILPN…AYAI, ATLS…GSIV, and WWIM…INLI. The 185-residue stretch at 97 to 281 folds into the ABC transmembrane type-1 domain; the sequence is LWIGLTVAVL…ISALAINLIG (185 aa).

Belongs to the binding-protein-dependent transport system permease family. The complex is composed of two ATP-binding proteins (BruAb2_1033 and BruAb2_1034), two transmembrane proteins (BruAb2_1031 and BruAb2_1032) and a solute-binding protein (BruAb2_1030).

It is found in the cell inner membrane. Functionally, probably part of an ABC transporter complex that could be involved in peptide import. Probably responsible for the translocation of the substrate across the membrane. This is Putative peptide transport system permease protein BruAb2_1032 from Brucella abortus biovar 1 (strain 9-941).